Consider the following 293-residue polypeptide: 33 kDa chaperonin (293 aa).

2 cysteine pairs are disulfide-bonded: C231/C233 and C264/C267.

The protein belongs to the HSP33 family. Post-translationally, under oxidizing conditions two disulfide bonds are formed involving the reactive cysteines. Under reducing conditions zinc is bound to the reactive cysteines and the protein is inactive.

It is found in the cytoplasm. Its function is as follows. Redox regulated molecular chaperone. Protects both thermally unfolding and oxidatively damaged proteins from irreversible aggregation. Plays an important role in the bacterial defense system toward oxidative stress. The protein is 33 kDa chaperonin of Yersinia pseudotuberculosis serotype O:1b (strain IP 31758).